Here is a 410-residue protein sequence, read N- to C-terminus: Peptidase T (410 aa).

Residue histidine 79 coordinates Zn(2+). Residue aspartate 81 is part of the active site. Residue aspartate 142 participates in Zn(2+) binding. Glutamate 176 functions as the Proton acceptor in the catalytic mechanism. Zn(2+) contacts are provided by glutamate 177, aspartate 199, and histidine 381.

This sequence belongs to the peptidase M20B family. Zn(2+) is required as a cofactor.

Its subcellular location is the cytoplasm. The catalysed reaction is Release of the N-terminal residue from a tripeptide.. In terms of biological role, cleaves the N-terminal amino acid of tripeptides. The protein is Peptidase T of Brevibacillus brevis (strain 47 / JCM 6285 / NBRC 100599).